We begin with the raw amino-acid sequence, 185 residues long: MIDEIFDDANDRMTKSVENLESNFAKIRTGRAHPSILDAVKVDYYGSEVPVSQVANVNVEDARTLTVQPWEQSMVSVVEKAIMTSDIGVNPVTTGNVMRIPMPPLTEERRKEFIKLAKSEAEQTKVAIRNIRRDANADFKNLNKDKEITDDELRQAEEQIQKATDEHVSQVDQMLAKKEESLMEI.

It belongs to the RRF family.

Its subcellular location is the cytoplasm. Functionally, responsible for the release of ribosomes from messenger RNA at the termination of protein biosynthesis. May increase the efficiency of translation by recycling ribosomes from one round of translation to another. In Hydrogenovibrio crunogenus (strain DSM 25203 / XCL-2) (Thiomicrospira crunogena), this protein is Ribosome-recycling factor.